The primary structure comprises 184 residues: Photosystem I assembly protein Ycf4 (184 aa).

2 consecutive transmembrane segments (helical) span residues Phe22–Ser42 and Ile57–Ser77.

This sequence belongs to the Ycf4 family.

Its subcellular location is the plastid. It is found in the chloroplast thylakoid membrane. Seems to be required for the assembly of the photosystem I complex. The polypeptide is Photosystem I assembly protein Ycf4 (Capsella bursa-pastoris (Shepherd's purse)).